We begin with the raw amino-acid sequence, 163 residues long: Ribosome maturation factor RimP (163 aa).

The protein belongs to the RimP family.

The protein localises to the cytoplasm. Required for maturation of 30S ribosomal subunits. This chain is Ribosome maturation factor RimP, found in Polynucleobacter necessarius subsp. necessarius (strain STIR1).